A 276-amino-acid chain; its full sequence is BES1/BZR1 homolog protein 1 (276 aa).

3 disordered regions span residues 1-30 (MTAS…RERR), 76-125 (TTYR…PTRF), and 155-191 (SAPV…PTRR). The tract at residues 14-87 (RMPTWKEREN…YRKGSRPTET (74 aa)) is required for DNA-binding. Residues 84–103 (PTETTVPCSSIQLSPQSSAF) are compositionally biased toward polar residues. The span at 104-122 (QSPIPSYQASPSSSSYPSP) shows a compositional bias: low complexity. At Thr159 the chain carries Phosphothreonine. The segment covering 164–174 (SPRRSNPRLPR) has biased composition (low complexity). Residues 175-189 (WQSSNFPVSAPSSPT) are compositionally biased toward polar residues.

It belongs to the BZR/LAT61 family. Phosphorylated. Phosphorylation increases protein degradation.

The chain is BES1/BZR1 homolog protein 1 (BEH1) from Arabidopsis thaliana (Mouse-ear cress).